The sequence spans 240 residues: Small ribosomal subunit protein uS3 (240 aa).

The 71-residue stretch at isoleucine 39 to asparagine 109 folds into the KH type-2 domain. Residues threonine 216–glutamine 240 are disordered.

It belongs to the universal ribosomal protein uS3 family. Part of the 30S ribosomal subunit. Forms a tight complex with proteins S10 and S14.

Binds the lower part of the 30S subunit head. Binds mRNA in the 70S ribosome, positioning it for translation. The protein is Small ribosomal subunit protein uS3 of Picosynechococcus sp. (strain ATCC 27264 / PCC 7002 / PR-6) (Agmenellum quadruplicatum).